Here is a 305-residue protein sequence, read N- to C-terminus: MARTADDSWDPASSVGATATMVAAGRAAASADPDPLINDPYAEPLVRAVGLSFFTKMLDGELDLSQFADGSPERVQAMIDGMAVRTRFFDDCCGTSTTAGITQVVILASGLDARAYRLGWPAGTVVYELDQPAVIEFKTRTLAGLGAHPTATHRPVPIDLREDWPAALHAAGFDASRPTAWLAEGLLIYLPPEAQDQLFDRITALSAPGSTIATEYAPGIIDFDDEKARAMSAPMREMGLDIDMPSLVYAGTRSHVMDYLAGQGWEVTGVPRRELFTRYGRPLPPEAGDTDPLGEIVYVSAHRPQ.

Residues Asp130 and 159-160 (DL) contribute to the S-adenosyl-L-methionine site.

This sequence belongs to the UPF0677 family.

Functionally, exhibits S-adenosyl-L-methionine-dependent methyltransferase activity. This is Putative S-adenosyl-L-methionine-dependent methyltransferase Mvan_1344 from Mycolicibacterium vanbaalenii (strain DSM 7251 / JCM 13017 / BCRC 16820 / KCTC 9966 / NRRL B-24157 / PYR-1) (Mycobacterium vanbaalenii).